Consider the following 355-residue polypeptide: 6-aminohexanoate-oligomer endohydrolase (355 aa).

The active-site Nucleophile is Thr-267.

It belongs to the peptidase S58 family. In terms of assembly, heterotetramer composed of 4 alpha/beta heterodimers. Post-translationally, expressed as an inactive precursor that is cleaved autocatalytically at Asn266/Thr267 to generate an active enzyme composed of an alpha subunit and a beta subunit.

The enzyme catalyses [N-(6-aminohexanoyl)]n + H2O = [N-(6-aminohexanoyl)]n-x + [N-(6-aminohexanoyl)]x.. It functions in the pathway xenobiotic degradation; nylon-6 oligomer degradation. Its function is as follows. Involved in the degradation of nylon-6 oligomers. Degrades cyclic and linear oligomers of 6-aminohexanoate (Ahx) with a degree of polymerization greater than three by an endo-type mode. Cannot use Ahx cyclic dimer or the Ahx linear dimer. The polypeptide is 6-aminohexanoate-oligomer endohydrolase (Agromyces sp. (strain KY5R)).